A 312-amino-acid polypeptide reads, in one-letter code: MSAQLQHVSVLLTEAVDALAIKPEGIYVDGTFGRGGHSRAVLARLGAGGRLIAFDRDPAAIAAGQAIADPRLELVHAPFSEFAVVLDRLGVSAVDGVLLDLGVSSPQLDDASRGMSFRFDAPLDMRMDTSRGRTVAEWLAEASVAEITEVIRDYGEERFAYAIAKAIAAARTGGAIATTGQLAAIVEKAVRTREPGQHPATRSFQALRIFINQELEELTTVLPDCVARLSEGGRLVVISFHSLEDRIVKRFLRDEARPPQLPSRLPVRAADLPPPRLQLVGKAQRPGEAEVAANPRARSAVMRVAERCGVAA.

S-adenosyl-L-methionine is bound by residues 35 to 37 (GGH), Asp-55, Phe-79, Asp-100, and Gln-107.

It belongs to the methyltransferase superfamily. RsmH family.

Its subcellular location is the cytoplasm. The catalysed reaction is cytidine(1402) in 16S rRNA + S-adenosyl-L-methionine = N(4)-methylcytidine(1402) in 16S rRNA + S-adenosyl-L-homocysteine + H(+). In terms of biological role, specifically methylates the N4 position of cytidine in position 1402 (C1402) of 16S rRNA. The sequence is that of Ribosomal RNA small subunit methyltransferase H from Azoarcus sp. (strain BH72).